A 961-amino-acid chain; its full sequence is FYVE, RhoGEF and PH domain-containing protein 1 (961 aa).

A compositionally biased stretch (gly residues) spans methionine 1–glycine 11. The tract at residues methionine 1–arginine 353 is disordered. Residues proline 27 to serine 38 are compositionally biased toward low complexity. Serine 48 carries the post-translational modification Phosphoserine. Positions proline 125–serine 135 are enriched in basic and acidic residues. 2 stretches are compositionally biased toward pro residues: residues glycine 156 to proline 165 and arginine 172 to alanine 190. The short motif at proline 171 to proline 187 is the SH3-binding element. Residues alanine 199 to serine 213 show a composition bias toward low complexity. Serine 205 is modified (phosphoserine). Positions valine 231–glutamine 255 are enriched in pro residues. Positions arginine 273 to glycine 284 are enriched in basic and acidic residues. 2 stretches are compositionally biased toward low complexity: residues isoleucine 285 to serine 294 and alanine 316 to alanine 325. Residues valine 335 to lysine 351 are compositionally biased toward acidic residues. The region spanning lysine 373–alanine 561 is the DH domain. In terms of domain architecture, PH 1 spans glutamate 590–leucine 689. Residues asparagine 702 to threonine 726 form a disordered region. Threonine 711 bears the Phosphothreonine mark. Serine 715 carries the phosphoserine modification. An FYVE-type zinc finger spans residues glutamate 730 to histidine 790. The Zn(2+) site is built by cysteine 736, cysteine 739, cysteine 753, cysteine 756, cysteine 761, cysteine 764, cysteine 782, and cysteine 785. In terms of domain architecture, PH 2 spans asparagine 821–arginine 921. Residues phenylalanine 925 to threonine 961 form a disordered region.

In terms of assembly, interacts with DBNL/ABP1 and CTTN. May interact with CCPG1. Binds CDC42. As to expression, expressed in fetal heart, brain, lung, kidney and placenta. Less expressed in liver; adult heart, brain, lung, pancreas and skeletal muscle.

Its subcellular location is the cytoplasm. The protein localises to the cell projection. It is found in the lamellipodium. The protein resides in the ruffle. It localises to the cytoskeleton. Its function is as follows. Activates CDC42, a member of the Ras-like family of Rho- and Rac proteins, by exchanging bound GDP for free GTP. Plays a role in regulating the actin cytoskeleton and cell shape. The chain is FYVE, RhoGEF and PH domain-containing protein 1 (FGD1) from Homo sapiens (Human).